The following is a 128-amino-acid chain: uncharacterized protein (128 aa).

A run of 3 helical transmembrane segments spans residues 30–50 (ILFT…LGSS), 65–85 (VFRG…LGIQ), and 93–113 (WEVA…PDIV).

It localises to the cell membrane. This is an uncharacterized protein from Rickettsia prowazekii (strain Madrid E).